A 258-amino-acid polypeptide reads, in one-letter code: Alpha-hydroxynitrile lyase (258 aa).

Active-site proton donor/acceptor residues include Ser-81 and His-236.

This sequence belongs to the AB hydrolase superfamily. Hydroxynitrile lyase family. As to quaternary structure, homodimer.

It carries out the reaction (R)-mandelonitrile = benzaldehyde + hydrogen cyanide. Functionally, involved in cyanogenesis, the release of HCN from injured tissues. Displays R-selective hydroxynitrile lyase activity. Also accepts nitromethane (MeNO2) as a donor in a reaction with aromatic aldehydes to yield (R)-beta-nitro alcohols. The polypeptide is Alpha-hydroxynitrile lyase (Arabidopsis thaliana (Mouse-ear cress)).